Reading from the N-terminus, the 489-residue chain is Betaine aldehyde dehydrogenase (489 aa).

K(+)-binding residues include Thr26 and Asp93. Position 150-152 (Gly150–Trp152) interacts with NAD(+). The active-site Charge relay system is the Lys162. Residue Lys176–Glu179 coordinates NAD(+). Val180 is a binding site for K(+). Gly229–Thr232 serves as a coordination point for NAD(+). Leu245 serves as a coordination point for K(+). Glu251 (proton acceptor) is an active-site residue. Gly253, Cys285, and Glu386 together coordinate NAD(+). Cys285 functions as the Nucleophile in the catalytic mechanism. Position 285 is a cysteine sulfenic acid (-SOH) (Cys285). Positions 456 and 459 each coordinate K(+). Residue Glu463 is the Charge relay system of the active site.

The protein belongs to the aldehyde dehydrogenase family. As to quaternary structure, dimer of dimers. K(+) is required as a cofactor.

It carries out the reaction betaine aldehyde + NAD(+) + H2O = glycine betaine + NADH + 2 H(+). It participates in amine and polyamine biosynthesis; betaine biosynthesis via choline pathway; betaine from betaine aldehyde: step 1/1. In terms of biological role, involved in the biosynthesis of the osmoprotectant glycine betaine. Catalyzes the irreversible oxidation of betaine aldehyde to the corresponding acid. The protein is Betaine aldehyde dehydrogenase of Burkholderia lata (strain ATCC 17760 / DSM 23089 / LMG 22485 / NCIMB 9086 / R18194 / 383).